A 523-amino-acid polypeptide reads, in one-letter code: Calcium-dependent protein kinase 34 (523 aa).

The interval 1-60 (MGNCCSHGRDSDDNKEEPRPENGGGGVGAAEASVRASKHPPASPPPATKQGPIGPVLGRP) is disordered. The N-myristoyl glycine moiety is linked to residue Gly2. Basic and acidic residues predominate over residues 7 to 20 (HGRDSDDNKEEPRP). A Protein kinase domain is found at 68–326 (YTLGKELGRG…AAQVLNHPWI (259 aa)). ATP contacts are provided by residues 74–82 (LGRGQFGVT) and Lys97. The active-site Proton acceptor is the Asp192. Phosphoserine is present on Ser232. The segment at 332–362 (APDVPLDNAVMSRLKQFKAMNNFKKVALRVI) is autoinhibitory domain. 4 consecutive EF-hand domains span residues 369–404 (EEIMGLKEMFKGMDTDNSGTITLEELRQGLAKQGTR), 405–440 (LSEYEVQQLMEAADADGNGTIDYGEFIAATMHINRL), 441–476 (DREEHLYSAFQHFDKDNSGYITTEELEQALREFGMN), and 480–511 (DIKEIISEVDGDNDGRINYEEFVAMMRKGNPD). Asp382, Asp384, Ser386, Thr388, Glu393, Asp418, Asp420, Asn422, Thr424, Glu429, Asp454, Asp456, Ser458, Tyr460, Glu465, Asp489, Asp491, Asp493, Arg495, and Glu500 together coordinate Ca(2+).

Belongs to the protein kinase superfamily. Ser/Thr protein kinase family. CDPK subfamily.

It is found in the membrane. It catalyses the reaction L-seryl-[protein] + ATP = O-phospho-L-seryl-[protein] + ADP + H(+). The enzyme catalyses L-threonyl-[protein] + ATP = O-phospho-L-threonyl-[protein] + ADP + H(+). With respect to regulation, activated by calcium. Autophosphorylation may play an important role in the regulation of the kinase activity. Functionally, may play a role in signal transduction pathways that involve calcium as a second messenger. In Arabidopsis thaliana (Mouse-ear cress), this protein is Calcium-dependent protein kinase 34 (CPK34).